A 204-amino-acid chain; its full sequence is Quinol oxidase subunit 3 (204 aa).

5 helical membrane passes run 27-47 (FWIF…TFFV), 66-86 (LVMI…IAVH), 95-115 (GVVI…GCEI), 140-160 (LLGT…GILI), and 184-204 (FLDV…LGGL).

It belongs to the cytochrome c oxidase subunit 3 family.

Its subcellular location is the cell membrane. It carries out the reaction 2 a quinol + O2 = 2 a quinone + 2 H2O. In terms of biological role, catalyzes quinol oxidation with the concomitant reduction of oxygen to water. Major component for energy conversion during vegetative growth. The protein is Quinol oxidase subunit 3 (qoxC) of Bacillus spizizenii (strain ATCC 23059 / NRRL B-14472 / W23) (Bacillus subtilis subsp. spizizenii).